The chain runs to 252 residues: tRNA pseudouridine synthase A (252 aa).

The active-site Nucleophile is aspartate 52. Residue tyrosine 112 participates in substrate binding.

Belongs to the tRNA pseudouridine synthase TruA family. Homodimer.

The enzyme catalyses uridine(38/39/40) in tRNA = pseudouridine(38/39/40) in tRNA. In terms of biological role, formation of pseudouridine at positions 38, 39 and 40 in the anticodon stem and loop of transfer RNAs. The chain is tRNA pseudouridine synthase A from Porphyromonas gingivalis (strain ATCC 33277 / DSM 20709 / CIP 103683 / JCM 12257 / NCTC 11834 / 2561).